The chain runs to 1092 residues: Myelin regulatory factor (1092 aa).

Residues 1–730 (MDVEDENETL…CVSQRFLQAT (730 aa)) are Cytoplasmic-facing. 3 disordered regions span residues 145–168 (SYAA…PQQL), 187–210 (PPSR…SIHQ), and 258–282 (QQHG…TNTL). The segment covering 196-205 (PPHLQGPLPP) has biased composition (pro residues). A DNA-binding region (NDT80) is located at residues 246 to 507 (AQQSQMLHQL…SNPGQFESDS (262 aa)). Residues 553-662 (SDIRAKESVE…KLTDNLETRI (110 aa)) form the Peptidase S74 domain. Residues 646–677 (GAVKELCKLTDNLETRIDELERWSHKLAKLRR) are a coiled coil. The span at 681–695 (MKSTNSHTGSSQFSR) shows a compositional bias: polar residues. The disordered stretch occupies residues 681–714 (MKSTNSHTGSSQFSRAGSVPYKQRPPKVMGKTVP). A helical transmembrane segment spans residues 731 to 751 (IIALVIIMAFSVISMTTLYVL). Topologically, residues 752–1092 (NLRSEDDMLG…YYFRFYRLCD (341 aa)) are lumenal. Disordered stretches follow at residues 798 to 817 (TTQL…SPDW) and 849 to 945 (ITRK…DSRY). Polar residues-rich tracts occupy residues 849–867 (ITRK…TDPA) and 928–945 (TPIT…DSRY). Residues Asn-941, Asn-961, Asn-974, and Asn-996 are each glycosylated (N-linked (GlcNAc...) asparagine).

Belongs to the MRF family. Homotrimer. In terms of processing, follows autocatalytic cleavage via the peptidase S74 domain. Autoprocessing is apparently constitutive and is essential for transcriptional activity.

Its subcellular location is the endoplasmic reticulum membrane. The protein resides in the nucleus. It is found in the cytoplasm. Constitutes a precursor of the transcription factor. Mediates the autocatalytic cleavage that releases the Myelin regulatory factor, N-terminal component that specifically activates transcription of central nervous system (CNS) myelin genes. In terms of biological role, membrane-bound part that has no transcription factor activity and remains attached to the endoplasmic reticulum membrane following cleavage. Its function is as follows. Transcription factor that specifically activates expression of myelin genes during oligodendrocyte (OL) maturation, thereby playing a central role in oligodendrocyte maturation and CNS myelination. The polypeptide is Myelin regulatory factor (myrf) (Xenopus laevis (African clawed frog)).